Here is a 246-residue protein sequence, read N- to C-terminus: Small ribosomal subunit protein uS2 (246 aa).

The protein belongs to the universal ribosomal protein uS2 family.

The chain is Small ribosomal subunit protein uS2 from Azotobacter vinelandii (strain DJ / ATCC BAA-1303).